The sequence spans 650 residues: Acetyl-coenzyme A synthetase (650 aa).

CoA is bound by residues 191–194 (RGGR), Thr311, and Asn335. ATP-binding positions include 387–389 (GEP), 411–416 (DTWWQT), Asp500, and Arg515. Ser523 contributes to the CoA binding site. Arg526 is a binding site for ATP. Residues Val537, His539, and Val542 each coordinate Mg(2+). Residue Arg584 participates in CoA binding. Lys609 is subject to N6-acetyllysine.

This sequence belongs to the ATP-dependent AMP-binding enzyme family. It depends on Mg(2+) as a cofactor. Post-translationally, acetylated. Deacetylation by the SIR2-homolog deacetylase activates the enzyme.

It catalyses the reaction acetate + ATP + CoA = acetyl-CoA + AMP + diphosphate. Functionally, catalyzes the conversion of acetate into acetyl-CoA (AcCoA), an essential intermediate at the junction of anabolic and catabolic pathways. AcsA undergoes a two-step reaction. In the first half reaction, AcsA combines acetate with ATP to form acetyl-adenylate (AcAMP) intermediate. In the second half reaction, it can then transfer the acetyl group from AcAMP to the sulfhydryl group of CoA, forming the product AcCoA. This Shewanella oneidensis (strain ATCC 700550 / JCM 31522 / CIP 106686 / LMG 19005 / NCIMB 14063 / MR-1) protein is Acetyl-coenzyme A synthetase.